A 127-amino-acid polypeptide reads, in one-letter code: Dual endothelin-1/VEGF signal peptide receptor (127 aa).

The Extracellular segment spans residues 1–69 (MSTFYVTAVP…EMKSRWNWGS (69 aa)). Residues 70-88 (ITCIMCFTCVGSQLSMSSS) traverse the membrane as a helical segment. At 89-127 (KASNFSGPLQLYQRGIGHITNPYRRPPAPAWPCSSSGTT) the chain is on the cytoplasmic side.

As to expression, prominently expressed in brain and heart tissues. Weakly expressed in aorta, adrenal gland, and lung tissues.

It is found in the cell membrane. In terms of biological role, in the Dahl salt-resistant strain, acts as a dual receptor for both endothelin-1 and the signal sequence of vascular endothelial growth factor A and does not act as a receptor for angiotensin-2. Does not bind the VEGFA mature protein. In the Dahl salt-sensitive strain, acts as a dual endothelin-1/angiotensin-2 receptor that is functionally coupled to a calcium-mobilizing transduction system, responding equivalently to both endothelin-1/EDN1 and angiotensin-2 peptides in a highly specific manner. May play a role in angiogenesis with a significant role in cardiovascular and neural development. This chain is Dual endothelin-1/VEGF signal peptide receptor, found in Rattus norvegicus (Rat).